The primary structure comprises 124 residues: Heat-labile enterotoxin B chain (124 aa).

The N-terminal stretch at 1-21 is a signal peptide; that stretch reads MNKVKFYVLFTALLSSLCAHG. C30 and C107 are disulfide-bonded.

Heterohexamer of one A chain and of five B chains.

In terms of biological role, the biological activity of the toxin is produced by the A chain, which activates intracellular adenyl cyclase. This Escherichia coli protein is Heat-labile enterotoxin B chain (eltB).